The following is a 427-amino-acid chain: Peptidase B (427 aa).

Residues lysine 195 and aspartate 200 each coordinate Mn(2+). The active site involves lysine 207. 3 residues coordinate Mn(2+): aspartate 218, aspartate 277, and glutamate 279. Arginine 281 is an active-site residue.

Belongs to the peptidase M17 family. As to quaternary structure, homohexamer. Mn(2+) serves as cofactor.

It is found in the cytoplasm. It catalyses the reaction Release of an N-terminal amino acid, Xaa, from a peptide or arylamide. Xaa is preferably Glu or Asp but may be other amino acids, including Leu, Met, His, Cys and Gln.. Probably plays an important role in intracellular peptide degradation. The sequence is that of Peptidase B from Shigella boydii serotype 18 (strain CDC 3083-94 / BS512).